The primary structure comprises 73 residues: Translation initiation factor IF-1 (73 aa).

The S1-like domain occupies 1–72 (MAKEDHIEMA…SKGRIIFRDK (72 aa)).

Belongs to the IF-1 family. Component of the 30S ribosomal translation pre-initiation complex which assembles on the 30S ribosome in the order IF-2 and IF-3, IF-1 and N-formylmethionyl-tRNA(fMet); mRNA recruitment can occur at any time during PIC assembly.

It localises to the cytoplasm. In terms of biological role, one of the essential components for the initiation of protein synthesis. Stabilizes the binding of IF-2 and IF-3 on the 30S subunit to which N-formylmethionyl-tRNA(fMet) subsequently binds. Helps modulate mRNA selection, yielding the 30S pre-initiation complex (PIC). Upon addition of the 50S ribosomal subunit IF-1, IF-2 and IF-3 are released leaving the mature 70S translation initiation complex. This chain is Translation initiation factor IF-1, found in Legionella pneumophila (strain Paris).